A 156-amino-acid polypeptide reads, in one-letter code: 6,7-dimethyl-8-ribityllumazine synthase (156 aa).

5-amino-6-(D-ribitylamino)uracil contacts are provided by residues Phe22, 57–59 (AYE), and 81–83 (TVI). 86-87 (GT) is a (2S)-2-hydroxy-3-oxobutyl phosphate binding site. His89 acts as the Proton donor in catalysis. Residue Phe114 participates in 5-amino-6-(D-ribitylamino)uracil binding. Residue Arg128 participates in (2S)-2-hydroxy-3-oxobutyl phosphate binding.

Belongs to the DMRL synthase family. Forms an icosahedral capsid composed of 60 subunits, arranged as a dodecamer of pentamers.

The enzyme catalyses (2S)-2-hydroxy-3-oxobutyl phosphate + 5-amino-6-(D-ribitylamino)uracil = 6,7-dimethyl-8-(1-D-ribityl)lumazine + phosphate + 2 H2O + H(+). Its pathway is cofactor biosynthesis; riboflavin biosynthesis; riboflavin from 2-hydroxy-3-oxobutyl phosphate and 5-amino-6-(D-ribitylamino)uracil: step 1/2. Functionally, catalyzes the formation of 6,7-dimethyl-8-ribityllumazine by condensation of 5-amino-6-(D-ribitylamino)uracil with 3,4-dihydroxy-2-butanone 4-phosphate. This is the penultimate step in the biosynthesis of riboflavin. This is 6,7-dimethyl-8-ribityllumazine synthase from Escherichia coli O45:K1 (strain S88 / ExPEC).